A 292-amino-acid chain; its full sequence is BTB/POZ domain-containing protein KCTD7 (292 aa).

A disordered region spans residues 1 to 27 (MVVFSAASDSEKPGDAMSGADKGEEEY). Residues 56 to 144 (IPLNVGGTYF…YAIGPLLENL (89 aa)) enclose the BTB domain.

The protein localises to the cell membrane. It localises to the cytoplasm. Its subcellular location is the cytosol. The polypeptide is BTB/POZ domain-containing protein KCTD7 (kctd7) (Danio rerio (Zebrafish)).